A 558-amino-acid polypeptide reads, in one-letter code: Tektin-5 (558 aa).

A coiled-coil region spans residues 347–381 (ISEETDVKNKLQTQLAKILQEIFQAENTIMLLERA).

It belongs to the tektin family. In terms of assembly, microtubule inner protein component of sperm flagellar doublet microtubules. Interacts with TEKT3. In terms of processing, ubiquitinated, leading to its degradation. Deubiquitinated by USP16, promoting its stability. In terms of tissue distribution, specifically expressed in testis.

It localises to the cytoplasm. Its subcellular location is the cytoskeleton. The protein localises to the flagellum axoneme. Sperm-specific microtubule inner protein (MIP) part of the dynein-decorated doublet microtubules (DMTs) in flagellar axoneme. Forms an extensive interaction network in different conformations that reinforces the helix bundle composed by other tektin proteins (TEKT1 to TEKT4) and MIPs to anchor the tektin bundle onto the tubulin wall of A-tubule of the sperm flagellum. The polypeptide is Tektin-5 (Rattus norvegicus (Rat)).